A 367-amino-acid chain; its full sequence is GPN-loop GTPase 1 (367 aa).

GTP contacts are provided by residues 15-22 and 18-23; these read GMAGSGKT and GSGKTT. The Gly-Pro-Asn (GPN)-loop; involved in dimer interface motif lies at 75–77; that stretch reads GPN. Residue 178–181 coordinates GTP; sequence NKCD. The stretch at 247–290 forms a coiled coil; sequence EGMDDFLEAVKAKVKEYEEEYVPEMERMKEIQRQTKERQKEAQL. The interval 306–332 is disordered; it reads VGLTVSDAEDEYNGELVDPDEDDGLTA. Residue serine 311 is modified to Phosphoserine. Over residues 312–332 the composition is skewed to acidic residues; the sequence is DAEDEYNGELVDPDEDDGLTA.

Belongs to the GPN-loop GTPase family. In terms of assembly, heterodimers with gpn2 or fet5/gpn3. Binds to RNA polymerase II (RNAPII).

It is found in the cytoplasm. Functionally, small GTPase required for proper nuclear import of RNA polymerase II (RNAPII). May act at an RNAP assembly step prior to nuclear import. The polypeptide is GPN-loop GTPase 1 (Schizosaccharomyces pombe (strain 972 / ATCC 24843) (Fission yeast)).